Consider the following 320-residue polypeptide: ATP phosphoribosyltransferase (320 aa).

It belongs to the ATP phosphoribosyltransferase family. Long subfamily. Mg(2+) serves as cofactor.

The protein localises to the cytoplasm. The enzyme catalyses 1-(5-phospho-beta-D-ribosyl)-ATP + diphosphate = 5-phospho-alpha-D-ribose 1-diphosphate + ATP. It participates in amino-acid biosynthesis; L-histidine biosynthesis; L-histidine from 5-phospho-alpha-D-ribose 1-diphosphate: step 1/9. Feedback inhibited by histidine. Functionally, catalyzes the condensation of ATP and 5-phosphoribose 1-diphosphate to form N'-(5'-phosphoribosyl)-ATP (PR-ATP). Has a crucial role in the pathway because the rate of histidine biosynthesis seems to be controlled primarily by regulation of HisG enzymatic activity. The chain is ATP phosphoribosyltransferase (hisG) from Caulobacter vibrioides (strain ATCC 19089 / CIP 103742 / CB 15) (Caulobacter crescentus).